The sequence spans 378 residues: UPF0754 membrane protein BCE33L0760 (378 aa).

A run of 2 helical transmembrane segments spans residues 1-21 and 357-377; these read MNIW…GGFT and YLGA…LLFL.

This sequence belongs to the UPF0754 family.

The protein resides in the cell membrane. This chain is UPF0754 membrane protein BCE33L0760, found in Bacillus cereus (strain ZK / E33L).